The sequence spans 715 residues: Polyribonucleotide nucleotidyltransferase (715 aa).

Mg(2+)-binding residues include Asp-500 and Asp-506. In terms of domain architecture, KH spans 567 to 634 (PKVKMIRINP…AYIESLVREA (68 aa)). The S1 motif domain occupies 637-712 (GELYEAKVTR…ERGRVDLSRK (76 aa)).

This sequence belongs to the polyribonucleotide nucleotidyltransferase family. Mg(2+) is required as a cofactor.

It is found in the cytoplasm. The enzyme catalyses RNA(n+1) + phosphate = RNA(n) + a ribonucleoside 5'-diphosphate. Its function is as follows. Involved in mRNA degradation. Catalyzes the phosphorolysis of single-stranded polyribonucleotides processively in the 3'- to 5'-direction. The chain is Polyribonucleotide nucleotidyltransferase from Acholeplasma laidlawii (strain PG-8A).